A 254-amino-acid chain; its full sequence is Phosphoribosylaminoimidazole-succinocarboxamide synthase (254 aa).

The protein belongs to the SAICAR synthetase family.

It catalyses the reaction 5-amino-1-(5-phospho-D-ribosyl)imidazole-4-carboxylate + L-aspartate + ATP = (2S)-2-[5-amino-1-(5-phospho-beta-D-ribosyl)imidazole-4-carboxamido]succinate + ADP + phosphate + 2 H(+). It participates in purine metabolism; IMP biosynthesis via de novo pathway; 5-amino-1-(5-phospho-D-ribosyl)imidazole-4-carboxamide from 5-amino-1-(5-phospho-D-ribosyl)imidazole-4-carboxylate: step 1/2. In Sinorhizobium medicae (strain WSM419) (Ensifer medicae), this protein is Phosphoribosylaminoimidazole-succinocarboxamide synthase.